The following is a 394-amino-acid chain: Monoterpene synthase FDS-5, chloroplastic (394 aa).

The transit peptide at 1–65 directs the protein to the chloroplast; sequence MASFISLSSK…NLNSQFMQVY (65 aa). The isopentenyl diphosphate site is built by lysine 100, arginine 103, and glutamine 138. Residues aspartate 145 and aspartate 149 each contribute to the Mg(2+) site. Positions 145–149 match the DDXXD motif motif; sequence DDMMD. Residue arginine 154 coordinates dimethylallyl diphosphate. Arginine 155 is an isopentenyl diphosphate binding site. Dimethylallyl diphosphate-binding residues include lysine 242, glutamine 281, lysine 298, and lysine 307.

The protein belongs to the FPP/GGPP synthase family. Mg(2+) is required as a cofactor. The cofactor is Mn(2+).

Its subcellular location is the plastid. It localises to the chloroplast. It carries out the reaction isopentenyl diphosphate + dimethylallyl diphosphate = (2E)-geranyl diphosphate + diphosphate. The catalysed reaction is 2 dimethylallyl diphosphate = (R,R)-chrysanthemyl diphosphate + diphosphate. The enzyme catalyses 2 dimethylallyl diphosphate = (R)-lavandulyl diphosphate + diphosphate. Condenses two molecules of dimethylallyl diphosphate (DMAPP) to produce mainly an irregular monoterpene, chrysanthemyl diphosphate (CPP) and lower amounts of a branched monoterpene, lavandulyl diphosphate (LPP). CPP is a precursor of the pyrethrin insecticides. When incubated with isopentenyl diphosphate (IPP) and DMAPP, catalyzes three competing isoprenoid condensation reactions, a chain elongation to give geranyl diphosphate (GPP), a cyclopropanation to give CPP and a branching to give LPP. In Artemisia spiciformis (Spiked big sagebrush), this protein is Monoterpene synthase FDS-5, chloroplastic (FDS-5).